The sequence spans 399 residues: Fructose-bisphosphate aldolase 1, chloroplastic (399 aa).

A chloroplast-targeting transit peptide spans 1–48; sequence MASSTATMLKASPVKSDWVKGQSLLLRQPSSVSAIRSHVAPSALTVRA. Arginine 96 is a binding site for substrate. At serine 158 the chain carries Phosphoserine. Residue lysine 186 participates in substrate binding. Serine 216 is modified (phosphoserine). The Proton acceptor role is filled by glutamate 226. Lysine 268 (schiff-base intermediate with dihydroxyacetone-P) is an active-site residue. 310–312 is a substrate binding site; the sequence is SGG. Lysine 395 carries the N6,N6,N6-trimethyllysine modification.

This sequence belongs to the class I fructose-bisphosphate aldolase family. As to quaternary structure, homotetramer. Can be trimethylated at Lys-395 by LSMT-L, but the trimethylation has no effect in vitro on the kinetic properties of the enzyme. Post-translationally, S-glutathionylated. In terms of tissue distribution, highly expressed in rosettes leaves and cauline leaves.

It is found in the plastid. Its subcellular location is the chloroplast. The protein localises to the plastoglobule. The protein resides in the chloroplast stroma. It carries out the reaction beta-D-fructose 1,6-bisphosphate = D-glyceraldehyde 3-phosphate + dihydroxyacetone phosphate. It functions in the pathway carbohydrate degradation; glycolysis; D-glyceraldehyde 3-phosphate and glycerone phosphate from D-glucose: step 4/4. In terms of biological role, plays a key role in glycolysis and gluconeogenesis. The protein is Fructose-bisphosphate aldolase 1, chloroplastic of Arabidopsis thaliana (Mouse-ear cress).